Consider the following 342-residue polypeptide: A-type ATP synthase subunit C (342 aa).

The protein belongs to the V-ATPase V0D/AC39 subunit family. Has multiple subunits with at least A(3), B(3), C, D, E, F, H, I and proteolipid K(x).

It is found in the cell membrane. Component of the A-type ATP synthase that produces ATP from ADP in the presence of a proton gradient across the membrane. The chain is A-type ATP synthase subunit C from Archaeoglobus fulgidus (strain ATCC 49558 / DSM 4304 / JCM 9628 / NBRC 100126 / VC-16).